Here is a 185-residue protein sequence, read N- to C-terminus: Large ribosomal subunit protein bL12c (185 aa).

The transit peptide at 1-47 directs the protein to the chloroplast; it reads MASTALSSAFSLLSLPSSSSPAAAAAAAPRSFAVPSRARPRRAVAVV.

Belongs to the bacterial ribosomal protein bL12 family.

It localises to the plastid. The protein localises to the chloroplast. The protein is Large ribosomal subunit protein bL12c (RPL12-2) of Oryza sativa subsp. japonica (Rice).